Reading from the N-terminus, the 314-residue chain is Ribosomal RNA small subunit methyltransferase H (314 aa).

S-adenosyl-L-methionine is bound by residues 32-34 (GGH), Asp52, Phe79, Asp100, and Gln107.

This sequence belongs to the methyltransferase superfamily. RsmH family.

The protein localises to the cytoplasm. The enzyme catalyses cytidine(1402) in 16S rRNA + S-adenosyl-L-methionine = N(4)-methylcytidine(1402) in 16S rRNA + S-adenosyl-L-homocysteine + H(+). In terms of biological role, specifically methylates the N4 position of cytidine in position 1402 (C1402) of 16S rRNA. This is Ribosomal RNA small subunit methyltransferase H from Shouchella clausii (strain KSM-K16) (Alkalihalobacillus clausii).